Here is a 254-residue protein sequence, read N- to C-terminus: NH(3)-dependent NAD(+) synthetase (254 aa).

Residue Gly-32–Ser-39 coordinates ATP. Asp-38 serves as a coordination point for Mg(2+). Residue Arg-113 participates in deamido-NAD(+) binding. An ATP-binding site is contributed by Thr-133. Glu-138 lines the Mg(2+) pocket. Residues Lys-146 and Asp-153 each coordinate deamido-NAD(+). ATP is bound by residues Lys-162 and Thr-184. His-244–Lys-245 provides a ligand contact to deamido-NAD(+).

It belongs to the NAD synthetase family. In terms of assembly, homodimer.

The catalysed reaction is deamido-NAD(+) + NH4(+) + ATP = AMP + diphosphate + NAD(+) + H(+). It functions in the pathway cofactor biosynthesis; NAD(+) biosynthesis; NAD(+) from deamido-NAD(+) (ammonia route): step 1/1. Its function is as follows. Catalyzes the ATP-dependent amidation of deamido-NAD to form NAD. Uses ammonia as a nitrogen source. This Thermococcus kodakarensis (strain ATCC BAA-918 / JCM 12380 / KOD1) (Pyrococcus kodakaraensis (strain KOD1)) protein is NH(3)-dependent NAD(+) synthetase.